The following is a 527-amino-acid chain: Peptide chain release factor 3 (527 aa).

Residues Asn-9–Gln-278 form the tr-type G domain. Residues Ser-18–Thr-25, Asp-86–His-90, and Asn-140–Asp-143 each bind GTP.

The protein belongs to the TRAFAC class translation factor GTPase superfamily. Classic translation factor GTPase family. PrfC subfamily.

The protein resides in the cytoplasm. In terms of biological role, increases the formation of ribosomal termination complexes and stimulates activities of RF-1 and RF-2. It binds guanine nucleotides and has strong preference for UGA stop codons. It may interact directly with the ribosome. The stimulation of RF-1 and RF-2 is significantly reduced by GTP and GDP, but not by GMP. In Haemophilus influenzae (strain PittGG), this protein is Peptide chain release factor 3.